A 70-amino-acid chain; its full sequence is Small ribosomal subunit protein bS21 (70 aa).

This sequence belongs to the bacterial ribosomal protein bS21 family.

The sequence is that of Small ribosomal subunit protein bS21 from Nautilia profundicola (strain ATCC BAA-1463 / DSM 18972 / AmH).